The sequence spans 829 residues: Periplasmic nitrate reductase (829 aa).

The segment at residues 1 to 30 (MKLSRRDFMKANAVAAAAAVAGVSAPTLAA) is a signal peptide (tat-type signal). Residues 41 to 97 (IKWDKAPCRFCGTGCSVLVGSQDGRVVATQGDPDAPVNRGLNCIKGYFLSKIMYGED) enclose the 4Fe-4S Mo/W bis-MGD-type domain. Positions 48, 51, 55, and 83 each coordinate [4Fe-4S] cluster. Residues Lys-85, Gln-152, Asn-177, Cys-181, 214 to 221 (WGSNMAEM), 245 to 249 (STFEH), 264 to 266 (QTD), Met-374, Gln-378, Asn-484, 510 to 511 (SD), Lys-533, Asp-560, and 719 to 728 (TGRVLEHWHT) each bind Mo-bis(molybdopterin guanine dinucleotide). Phe-795 lines the substrate pocket. Mo-bis(molybdopterin guanine dinucleotide)-binding residues include Asn-803 and Lys-820.

It belongs to the prokaryotic molybdopterin-containing oxidoreductase family. NasA/NapA/NarB subfamily. Component of the periplasmic nitrate reductase NapAB complex composed of NapA and NapB. Requires [4Fe-4S] cluster as cofactor. Mo-bis(molybdopterin guanine dinucleotide) is required as a cofactor. Post-translationally, predicted to be exported by the Tat system. The position of the signal peptide cleavage has not been experimentally proven.

Its subcellular location is the periplasm. It catalyses the reaction 2 Fe(II)-[cytochrome] + nitrate + 2 H(+) = 2 Fe(III)-[cytochrome] + nitrite + H2O. Its function is as follows. Catalytic subunit of the periplasmic nitrate reductase complex NapAB. Receives electrons from NapB and catalyzes the reduction of nitrate to nitrite. The polypeptide is Periplasmic nitrate reductase (Aeromonas salmonicida (strain A449)).